Reading from the N-terminus, the 530-residue chain is Ubiquitin carboxyl-terminal hydrolase 17-like protein 17 (530 aa).

A USP domain is found at 80–375 (AGLQNMGNTC…QAYVLFYIQK (296 aa)). Cys89 functions as the Nucleophile in the catalytic mechanism. The active-site Proton acceptor is His334. Basic and acidic residues-rich tracts occupy residues 382 to 392 (SESVSRGREPR) and 398 to 411 (DTDR…LKRD). Disordered regions lie at residues 382–411 (SESV…LKRD) and 477–530 (NHHP…LVCQ). Over residues 493-505 (TPTHQESMNTGTL) the composition is skewed to polar residues. Positions 510 to 524 (GRARRSKGKNKHSKR) are enriched in basic residues.

Belongs to the peptidase C19 family. USP17 subfamily.

It is found in the nucleus. The protein localises to the endoplasmic reticulum. The catalysed reaction is Thiol-dependent hydrolysis of ester, thioester, amide, peptide and isopeptide bonds formed by the C-terminal Gly of ubiquitin (a 76-residue protein attached to proteins as an intracellular targeting signal).. Its function is as follows. Deubiquitinating enzyme that removes conjugated ubiquitin from specific proteins to regulate different cellular processes that may include cell proliferation, progression through the cell cycle, apoptosis, cell migration, and the cellular response to viral infection. The protein is Ubiquitin carboxyl-terminal hydrolase 17-like protein 17 (USP17L17) of Homo sapiens (Human).